The following is a 159-amino-acid chain: Na(+)/H(+) antiporter subunit E1 (159 aa).

4 helical membrane-spanning segments follow: residues 1-21, 27-47, 49-69, and 101-121; these read MAVQ…VTNS, FVLG…VLPG, FYVI…IELI, and WQIV…VLGV.

Belongs to the CPA3 antiporters (TC 2.A.63) subunit E family. May form a heterooligomeric complex that consists of seven subunits: mnhA1, mnhB1, mnhC1, mnhD1, mnhE1, mnhF1 and mnhG1.

It localises to the cell membrane. In terms of biological role, mnh complex is a Na(+)/H(+) antiporter involved in Na(+) excretion. In Staphylococcus aureus (strain Mu3 / ATCC 700698), this protein is Na(+)/H(+) antiporter subunit E1 (mnhE1).